The primary structure comprises 599 residues: MTDIKNIRNFSIIAHIDHGKSTLADRFIQVCGGLSERELKEQVLDSMELERERGITIKAQSVTLHYTARDGETYQLNFIDTPGHVDFSYEVSRSLSACEGALLVVDAAQGVEAQSVANCYTAIEQDLEVLAVLNKIDLPQAEPEMVINEIEEIIGLDAHDACRVSAKTGVGIDDLLEQLVERIPAPEGKRESDLQALIIDSWFDNYMGVISLVRVKEGRLKKGDKILVKSTGQTHVVDSLGIFTPKRTETKLLEAGEVGWVSGSIKDIHGAPVGDTLTLAKTPNVAALPGFKNVKPQVYAGMFPVSADDYEDFRDALAKLTLNDASLFYEPETSDALGFGFRVGFLGMLHMEIIQERLEREYDLDLITTAPTVVYELALVSGDILHVDNPSKLPEGSKIEEFREPIARVNILVPQEFVGNVITLCVERRGAQINMQYLGKQVALTYDIPMAEVVLDFFDRIKSVSRGFASMDYAFERFEATKLVRVDVLINGDKVDALAMICHLDQSAYRGRALCEKMKELVPRQMFDVAIQAAIGSKIIARQTVKALRKNVTAKCYGGDVSRKKKLLQKQKEGKKRMKQVGNVEIPQEAFLAVLKVDD.

In terms of domain architecture, tr-type G spans 5-187 (KNIRNFSIIA…QLVERIPAPE (183 aa)). Residues 17-22 (DHGKST) and 134-137 (NKID) contribute to the GTP site.

It belongs to the TRAFAC class translation factor GTPase superfamily. Classic translation factor GTPase family. LepA subfamily.

The protein localises to the cell inner membrane. It carries out the reaction GTP + H2O = GDP + phosphate + H(+). Functionally, required for accurate and efficient protein synthesis under certain stress conditions. May act as a fidelity factor of the translation reaction, by catalyzing a one-codon backward translocation of tRNAs on improperly translocated ribosomes. Back-translocation proceeds from a post-translocation (POST) complex to a pre-translocation (PRE) complex, thus giving elongation factor G a second chance to translocate the tRNAs correctly. Binds to ribosomes in a GTP-dependent manner. This chain is Elongation factor 4, found in Alcanivorax borkumensis (strain ATCC 700651 / DSM 11573 / NCIMB 13689 / SK2).